The sequence spans 401 residues: Nicotinate phosphoribosyltransferase (401 aa).

Residue H221 is modified to Phosphohistidine; by autocatalysis.

Belongs to the NAPRTase family. Transiently phosphorylated on a His residue during the reaction cycle. Phosphorylation strongly increases the affinity for substrates and increases the rate of nicotinate D-ribonucleotide production. Dephosphorylation regenerates the low-affinity form of the enzyme, leading to product release.

It catalyses the reaction nicotinate + 5-phospho-alpha-D-ribose 1-diphosphate + ATP + H2O = nicotinate beta-D-ribonucleotide + ADP + phosphate + diphosphate. It functions in the pathway cofactor biosynthesis; NAD(+) biosynthesis; nicotinate D-ribonucleotide from nicotinate: step 1/1. Its function is as follows. Catalyzes the synthesis of beta-nicotinate D-ribonucleotide from nicotinate and 5-phospho-D-ribose 1-phosphate at the expense of ATP. The sequence is that of Nicotinate phosphoribosyltransferase from Yersinia pseudotuberculosis serotype O:1b (strain IP 31758).